We begin with the raw amino-acid sequence, 88 residues long: MAGKVTVAFFMFAMIAFLANFGYVECNPAIATGYDPMEICIENCAQCKKMLGAWFEGPLCAESCIKFKGKLIPECEDFASIAPFLNKL.

The N-terminal stretch at 1–26 (MAGKVTVAFFMFAMIAFLANFGYVEC) is a signal peptide. Disulfide bonds link Cys-40-Cys-64, Cys-44-Cys-60, and Cys-47-Cys-75.

The protein belongs to the insect eclosion hormone family.

It is found in the secreted. In terms of biological role, neuropeptide that triggers the performance of ecdysis behaviors at the end of a molt. It triggers adult behavior patterns: larval, pupal and adult ecdysis, and plasticization during the molt. The sequence is that of Eclosion hormone from Manduca sexta (Tobacco hawkmoth).